Reading from the N-terminus, the 180-residue chain is Transcription repressor NadR (180 aa).

As to quaternary structure, homodimer.

In the presence of nicotinic acid represses transcription of the nadBCA and nifS-nadR operons. Also binds to DNA upstream of the niaP gene, probably regulating it as well. May bind nicotinic acid. This chain is Transcription repressor NadR (nadR), found in Bacillus subtilis (strain 168).